Here is a 454-residue protein sequence, read N- to C-terminus: tRNA modification GTPase MnmE (454 aa).

(6S)-5-formyl-5,6,7,8-tetrahydrofolate is bound by residues arginine 23, glutamate 80, and lysine 120. A TrmE-type G domain is found at 216–377 (GMKVVIAGRP…LRNHLKQSMG (162 aa)). Asparagine 226 provides a ligand contact to K(+). GTP is bound by residues 226 to 231 (NAGKSS), 245 to 251 (TDIAGTT), 270 to 273 (DTAG), 335 to 338 (NKAD), and 358 to 360 (SAR). Mg(2+) is bound at residue serine 230. The K(+) site is built by threonine 245, isoleucine 247, and threonine 250. Position 251 (threonine 251) interacts with Mg(2+). Lysine 454 contributes to the (6S)-5-formyl-5,6,7,8-tetrahydrofolate binding site.

Belongs to the TRAFAC class TrmE-Era-EngA-EngB-Septin-like GTPase superfamily. TrmE GTPase family. Homodimer. Heterotetramer of two MnmE and two MnmG subunits. The cofactor is K(+).

It is found in the cytoplasm. Exhibits a very high intrinsic GTPase hydrolysis rate. Involved in the addition of a carboxymethylaminomethyl (cmnm) group at the wobble position (U34) of certain tRNAs, forming tRNA-cmnm(5)s(2)U34. The chain is tRNA modification GTPase MnmE from Enterobacter sp. (strain 638).